Reading from the N-terminus, the 21-residue chain is Mast cell protease 3 (21 aa).

In terms of domain architecture, Peptidase S1 spans 1–21 (IIGGVESRPHSRPYMATLEIT). The segment at 1 to 21 (IIGGVESRPHSRPYMATLEIT) is disordered.

This sequence belongs to the peptidase S1 family. Granzyme subfamily.

Its function is as follows. Thrombin inactivating protease. Displays chymotrypsin-like substrate specificity. The polypeptide is Mast cell protease 3 (Mcpt3) (Mus musculus (Mouse)).